The chain runs to 37 residues: LRPGAQCADGLCCDQCRAGEECDCGSPANCCDAATCK.

3 disulfide bridges follow: Cys12-Cys16, Cys22-Cys36, and Cys24-Cys31.

It belongs to the venom metalloproteinase (M12B) family. P-II subfamily. P-IIa sub-subfamily. In terms of tissue distribution, expressed by the venom gland.

The protein localises to the secreted. Its function is as follows. Inhibits ADP-induced platelet aggregation in human whole blood in a concentration-dependent manner (IC(50)=89.5 nM). The protein is Disintegrin morulustatin of Crotalus morulus (Tamaulipan rock rattlesnake).